Consider the following 132-residue polypeptide: Small ribosomal subunit protein uS8 (132 aa).

This sequence belongs to the universal ribosomal protein uS8 family. Part of the 30S ribosomal subunit. Contacts proteins S5 and S12.

Functionally, one of the primary rRNA binding proteins, it binds directly to 16S rRNA central domain where it helps coordinate assembly of the platform of the 30S subunit. The protein is Small ribosomal subunit protein uS8 of Rickettsia typhi (strain ATCC VR-144 / Wilmington).